The primary structure comprises 363 residues: Holliday junction branch migration complex subunit RuvB (363 aa).

The tract at residues 1–32 (MAIQTDSFAAAPAPSSGSTRRLISAAPTSPNE) is disordered. Residues 7 to 18 (SFAAAPAPSSGS) are compositionally biased toward low complexity. The large ATPase domain (RuvB-L) stretch occupies residues 13 to 200 (APSSGSTRRL…FGIVARLEFY (188 aa)). Residues L39, R40, G81, K84, T85, T86, 147–149 (EDY), R190, Y200, and R237 each bind ATP. Position 85 (T85) interacts with Mg(2+). The interval 201–271 (TPEELVRIVT…IAELALTMLD (71 aa)) is small ATPAse domain (RuvB-S). Residues 274 to 363 (PRGFDVMDRK…GPVGSDLFEG (90 aa)) form a head domain (RuvB-H) region. DNA-binding residues include R329 and R334.

Belongs to the RuvB family. Homohexamer. Forms an RuvA(8)-RuvB(12)-Holliday junction (HJ) complex. HJ DNA is sandwiched between 2 RuvA tetramers; dsDNA enters through RuvA and exits via RuvB. An RuvB hexamer assembles on each DNA strand where it exits the tetramer. Each RuvB hexamer is contacted by two RuvA subunits (via domain III) on 2 adjacent RuvB subunits; this complex drives branch migration. In the full resolvosome a probable DNA-RuvA(4)-RuvB(12)-RuvC(2) complex forms which resolves the HJ.

Its subcellular location is the cytoplasm. The catalysed reaction is ATP + H2O = ADP + phosphate + H(+). Functionally, the RuvA-RuvB-RuvC complex processes Holliday junction (HJ) DNA during genetic recombination and DNA repair, while the RuvA-RuvB complex plays an important role in the rescue of blocked DNA replication forks via replication fork reversal (RFR). RuvA specifically binds to HJ cruciform DNA, conferring on it an open structure. The RuvB hexamer acts as an ATP-dependent pump, pulling dsDNA into and through the RuvAB complex. RuvB forms 2 homohexamers on either side of HJ DNA bound by 1 or 2 RuvA tetramers; 4 subunits per hexamer contact DNA at a time. Coordinated motions by a converter formed by DNA-disengaged RuvB subunits stimulates ATP hydrolysis and nucleotide exchange. Immobilization of the converter enables RuvB to convert the ATP-contained energy into a lever motion, pulling 2 nucleotides of DNA out of the RuvA tetramer per ATP hydrolyzed, thus driving DNA branch migration. The RuvB motors rotate together with the DNA substrate, which together with the progressing nucleotide cycle form the mechanistic basis for DNA recombination by continuous HJ branch migration. Branch migration allows RuvC to scan DNA until it finds its consensus sequence, where it cleaves and resolves cruciform DNA. This Leptothrix cholodnii (strain ATCC 51168 / LMG 8142 / SP-6) (Leptothrix discophora (strain SP-6)) protein is Holliday junction branch migration complex subunit RuvB.